We begin with the raw amino-acid sequence, 223 residues long: Ribose-5-phosphate isomerase A (223 aa).

Substrate contacts are provided by residues 32 to 35 (TGST), 83 to 86 (DGAD), and 96 to 99 (KGGG). The active-site Proton acceptor is the E105. Residue K123 coordinates substrate.

The protein belongs to the ribose 5-phosphate isomerase family. In terms of assembly, homodimer.

It catalyses the reaction aldehydo-D-ribose 5-phosphate = D-ribulose 5-phosphate. The protein operates within carbohydrate degradation; pentose phosphate pathway; D-ribose 5-phosphate from D-ribulose 5-phosphate (non-oxidative stage): step 1/1. Functionally, catalyzes the reversible conversion of ribose-5-phosphate to ribulose 5-phosphate. In Acinetobacter baumannii (strain AYE), this protein is Ribose-5-phosphate isomerase A.